Consider the following 440-residue polypeptide: Glutamyl-tRNA reductase (440 aa).

Substrate is bound by residues 40 to 43 (TCNR), Ser100, 105 to 107 (ERE), and Gln111. Cys41 functions as the Nucleophile in the catalytic mechanism. 181–186 (GTGAYA) lines the NADP(+) pocket.

It belongs to the glutamyl-tRNA reductase family. As to quaternary structure, homodimer.

It catalyses the reaction (S)-4-amino-5-oxopentanoate + tRNA(Glu) + NADP(+) = L-glutamyl-tRNA(Glu) + NADPH + H(+). The protein operates within porphyrin-containing compound metabolism; protoporphyrin-IX biosynthesis; 5-aminolevulinate from L-glutamyl-tRNA(Glu): step 1/2. In terms of biological role, catalyzes the NADPH-dependent reduction of glutamyl-tRNA(Glu) to glutamate 1-semialdehyde (GSA). In Renibacterium salmoninarum (strain ATCC 33209 / DSM 20767 / JCM 11484 / NBRC 15589 / NCIMB 2235), this protein is Glutamyl-tRNA reductase.